Consider the following 290-residue polypeptide: uncharacterized protein (290 aa).

The interval 153–178 (EMVPITTSSTTPRSKGDEATSTGAFP) is disordered. The segment covering 157–178 (ITTSSTTPRSKGDEATSTGAFP) has biased composition (polar residues). A helical transmembrane segment spans residues 202-222 (LIAVTLLLGGAAIIVFVIFEV). The disordered stretch occupies residues 246 to 276 (KEEDQKPGTTESQLDSQPEKVKHNVPNSSDS). Residues 252 to 261 (PGTTESQLDS) show a composition bias toward polar residues.

The protein resides in the membrane. This is an uncharacterized protein from Mus musculus (Mouse).